A 430-amino-acid chain; its full sequence is tRNA pseudouridine synthase Pus10 (430 aa).

Catalysis depends on D253, which acts as the Nucleophile. The substrate site is built by Y320 and Y392.

It belongs to the pseudouridine synthase Pus10 family.

The catalysed reaction is uridine(54) in tRNA = pseudouridine(54) in tRNA. The enzyme catalyses uridine(55) in tRNA = pseudouridine(55) in tRNA. Functionally, responsible for synthesis of pseudouridine from uracil-54 and uracil-55 in the psi GC loop of transfer RNAs. This chain is tRNA pseudouridine synthase Pus10, found in Ignisphaera aggregans (strain DSM 17230 / JCM 13409 / AQ1.S1).